The primary structure comprises 354 residues: Uroporphyrinogen decarboxylase (354 aa).

Substrate-binding positions include 27-31 (RQAGR), Asp77, Tyr154, Thr209, and His327.

This sequence belongs to the uroporphyrinogen decarboxylase family. In terms of assembly, homodimer.

The protein resides in the cytoplasm. The catalysed reaction is uroporphyrinogen III + 4 H(+) = coproporphyrinogen III + 4 CO2. Its pathway is porphyrin-containing compound metabolism; protoporphyrin-IX biosynthesis; coproporphyrinogen-III from 5-aminolevulinate: step 4/4. Catalyzes the decarboxylation of four acetate groups of uroporphyrinogen-III to yield coproporphyrinogen-III. This chain is Uroporphyrinogen decarboxylase, found in Pectobacterium atrosepticum (strain SCRI 1043 / ATCC BAA-672) (Erwinia carotovora subsp. atroseptica).